We begin with the raw amino-acid sequence, 909 residues long: Cutinase transcription factor 1 alpha (909 aa).

The segment at 1 to 51 is disordered; that stretch reads MSSGDAPPQAQPQPHQQEQPNQRQSSTPAPSAAPVPPAPSTSTSNSAGGVS. A compositionally biased stretch (low complexity) spans 12–30; that stretch reads PQPHQQEQPNQRQSSTPAP. A DNA-binding region (zn(2)-C6 fungal-type) is located at residues 61-90; the sequence is CETCHARKVRCDAASLGVPCTNCVAFQIEC. Disordered stretches follow at residues 95–159, 651–757, and 841–878; these read PKRK…EAQA, AEGK…SFSV, and LPQG…QGQA. Basic and acidic residues predominate over residues 110–119; it reads KDSDSDRGDG. Over residues 142-156 the composition is skewed to polar residues; the sequence is VFHSHNGTPPTTLTE. The span at 669-683 shows a compositional bias: basic and acidic residues; it reads QHSRQQEAPKRKYDE. 3 stretches are compositionally biased toward polar residues: residues 704–717, 737–755, and 865–878; these read PQTP…TSSM, GGTN…NPSF, and SPDS…QGQA.

It is found in the nucleus. The chain is Cutinase transcription factor 1 alpha (CTF1-ALPHA) from Fusarium vanettenii (Neocosmospora pisi).